We begin with the raw amino-acid sequence, 190 residues long: Small ribosomal subunit protein uS5 (190 aa).

One can recognise an S5 DRBM domain in the interval phenylalanine 22–valine 85.

The protein belongs to the universal ribosomal protein uS5 family. In terms of assembly, part of the 30S ribosomal subunit. Contacts proteins S4 and S8.

Its function is as follows. With S4 and S12 plays an important role in translational accuracy. In terms of biological role, located at the back of the 30S subunit body where it stabilizes the conformation of the head with respect to the body. This chain is Small ribosomal subunit protein uS5, found in Rhodopseudomonas palustris (strain BisB18).